The chain runs to 252 residues: Ribosomal RNA small subunit methyltransferase J (252 aa).

Residues 104–105, 120–121, and D174 each bind S-adenosyl-L-methionine; these read RD and ER.

Belongs to the methyltransferase superfamily. RsmJ family.

It localises to the cytoplasm. It catalyses the reaction guanosine(1516) in 16S rRNA + S-adenosyl-L-methionine = N(2)-methylguanosine(1516) in 16S rRNA + S-adenosyl-L-homocysteine + H(+). Specifically methylates the guanosine in position 1516 of 16S rRNA. The sequence is that of Ribosomal RNA small subunit methyltransferase J from Mannheimia succiniciproducens (strain KCTC 0769BP / MBEL55E).